Here is a 482-residue protein sequence, read N- to C-terminus: MVTTAEKTNIGYITQIIGPVVDVKFPGGKLPQIYNALKIVGTNESGQEINITVEVQQLLGDNQVRTVAMSSTEGLVRGFEVTDTGAPITVPVGKATLGRIFNVLGEPVDNRGPVNAEASLPIHRSAPKFTDLETKPSVFETGIKVVDLLTPYRRGGKIGLFGGAGVGKTVIMMELINNIATQHGGVSVFAGVGERTREGNDLYNEMIESGVINNENLNESKIALVYGQMNEPPGARMRVGLSGLTVAEYFRDVNKQDVLLFIDNIFRFVQAGSEVSALLGRMPSAVGYQPTLGTDVGELQERITSTTEGSITSIQAVYVPADDLTDPAPATTFAHLDGTTVLSRGLAAKGIYPAVDPLGSTSTMLQPNIVGDEHYNTARAVQSTLQRYKELQDIIAILGLDELSEEDRLIVARARKVERFLSQPFFVAEVFTGSPGKYVKLEDTIKGFQKILSGELDALPEQAFYLVGDINEAIAKAEKIKG.

162-169 (GGAGVGKT) contributes to the ATP binding site.

Belongs to the ATPase alpha/beta chains family. As to quaternary structure, F-type ATPases have 2 components, CF(1) - the catalytic core - and CF(0) - the membrane proton channel. CF(1) has five subunits: alpha(3), beta(3), gamma(1), delta(1), epsilon(1). CF(0) has four main subunits: a(1), b(1), b'(1) and c(9-12).

Its subcellular location is the cellular thylakoid membrane. The catalysed reaction is ATP + H2O + 4 H(+)(in) = ADP + phosphate + 5 H(+)(out). Functionally, produces ATP from ADP in the presence of a proton gradient across the membrane. The catalytic sites are hosted primarily by the beta subunits. The polypeptide is ATP synthase subunit beta (Nostoc punctiforme (strain ATCC 29133 / PCC 73102)).